The chain runs to 345 residues: RNA pseudouridine synthase 1 (345 aa).

Asp134 is a catalytic residue.

Belongs to the pseudouridine synthase RluA family.

The enzyme catalyses a uridine in RNA = a pseudouridine in RNA. The protein is RNA pseudouridine synthase 1 of Oryza sativa subsp. japonica (Rice).